Consider the following 281-residue polypeptide: Bis(5'-nucleosyl)-tetraphosphatase, symmetrical (281 aa).

It belongs to the Ap4A hydrolase family.

The enzyme catalyses P(1),P(4)-bis(5'-adenosyl) tetraphosphate + H2O = 2 ADP + 2 H(+). In terms of biological role, hydrolyzes diadenosine 5',5'''-P1,P4-tetraphosphate to yield ADP. This chain is Bis(5'-nucleosyl)-tetraphosphatase, symmetrical, found in Pectobacterium carotovorum subsp. carotovorum (strain PC1).